A 205-amino-acid chain; its full sequence is Gap junction epsilon-1 protein (205 aa).

Topologically, residues 1-23 are cytoplasmic; sequence MSLNYIKNFYEGCVKPPTVIGQF. Residues 24–44 form a helical membrane-spanning segment; the sequence is HTLFFGSIRIFFLGVLGFAVY. Over 45-76 the chain is Extracellular; sequence GNEALHFICDPDKREVNLFCYNQFRPITPQVS. 2 cysteine pairs are disulfide-bonded: C53/C161 and C64/C148. Residues 77 to 97 form a helical membrane-spanning segment; sequence FSALQLVIVLVPGALFHLYAA. Topologically, residues 98 to 112 are cytoplasmic; that stretch reads CKSINQECILQKPIY. A helical transmembrane segment spans residues 113 to 133; that stretch reads TIIYILSVLLRISLAAIAFWL. The Extracellular portion of the chain corresponds to 134–170; the sequence is QIYLFGFQVKSLYLCDARSLGENMIIRCMVPEHFEKT. Residues 171–191 traverse the membrane as a helical segment; the sequence is IFLIAINTFTTITILLFVAEI. The Cytoplasmic segment spans residues 192–205; sequence FEIIFRRLYFPFRQ.

This sequence belongs to the connexin family. Beta-type (group I) subfamily. In terms of assembly, a connexon is composed of a hexamer of connexins. In terms of tissue distribution, not detected in lens or retina.

The protein resides in the cell membrane. In terms of biological role, mediates calcium-independent ATP release, suggesting activity as a hemichannel. Does not form functional gap junctions. This Homo sapiens (Human) protein is Gap junction epsilon-1 protein (GJE1).